A 399-amino-acid polypeptide reads, in one-letter code: MASSTATMLKASPVKSDWVKGQSLLLRQPSSVSAIRSHVAPSALTVRAASAYADELVKTAKTIASPGHGIMAMDESNATCGKRLASIGLENTEANRQAYRTLLVSAPGLGQYISGAILFEETLYQSTTDGKKMVDVLVEQNIVPGIKVDKGLVPLVGSYDESWCQGLDGLASRTAAYYQQGARFAKWRTVVSIPNGPSALAVKEAAWGLARYAAISQDSGLVPIVEPEIMLDGEHGIDRTYDVAEKVWAEVFFYLAQNNVMFEGILLKPSMVTPGAEATDRATPEQVASYTLKLLRNRIPPAVPGIMFLSGGQSELEATLNLNAMNQAPNPWHVSFSYARALQNTCLKTWGGKEENVKAAQDILLARAKANSLAQLGKYTGEGESEEAKEGMFVKGYTY.

The transit peptide at 1–48 (MASSTATMLKASPVKSDWVKGQSLLLRQPSSVSAIRSHVAPSALTVRA) directs the protein to the chloroplast. A substrate-binding site is contributed by Arg96. A Phosphoserine modification is found at Ser158. A substrate-binding site is contributed by Lys186. Ser216 is modified (phosphoserine). Catalysis depends on Glu226, which acts as the Proton acceptor. Lys268 functions as the Schiff-base intermediate with dihydroxyacetone-P in the catalytic mechanism. 310–312 (SGG) provides a ligand contact to substrate. Lys395 is modified (N6,N6,N6-trimethyllysine).

This sequence belongs to the class I fructose-bisphosphate aldolase family. As to quaternary structure, homotetramer. Post-translationally, can be trimethylated at Lys-395 by LSMT-L, but the trimethylation has no effect in vitro on the kinetic properties of the enzyme. S-glutathionylated. Highly expressed in rosettes leaves and cauline leaves.

It localises to the plastid. Its subcellular location is the chloroplast. It is found in the plastoglobule. The protein resides in the chloroplast stroma. It carries out the reaction beta-D-fructose 1,6-bisphosphate = D-glyceraldehyde 3-phosphate + dihydroxyacetone phosphate. The protein operates within carbohydrate degradation; glycolysis; D-glyceraldehyde 3-phosphate and glycerone phosphate from D-glucose: step 4/4. Functionally, plays a key role in glycolysis and gluconeogenesis. This chain is Fructose-bisphosphate aldolase 1, chloroplastic, found in Arabidopsis thaliana (Mouse-ear cress).